The sequence spans 1478 residues: Fanconi anemia group D2 protein homolog (1478 aa).

The disordered stretch occupies residues 33-53; it reads NISVESSSGGSEENIPASQEH. The segment covering 35–45 has biased composition (low complexity); sequence SVESSSGGSEE. Lys-595 is covalently cross-linked (Glycyl lysine isopeptide (Lys-Gly) (interchain with G-Cter in ubiquitin)). 2 disordered regions span residues 896–918 and 1420–1478; these read NQNQ…PEPD and TPRS…SKCF. The segment covering 1429 to 1442 has biased composition (acidic residues); it reads ENSDDELPADDTSV. Residues 1468-1478 are compositionally biased toward basic residues; the sequence is RSKSSSRSKCF.

Belongs to the Fanconi anemia protein FANCD2 family. Homodimer; cannot be ubiquitinated and does not bind DNA. Part of a Fanci-Fancd2 heterodimeric complex that binds and scans dsDNA for DNA damage. Interacts with Fancl (via C-terminus). In terms of processing, monoubiquitinated by Fancl in response to ionising radiation.

The protein localises to the nucleus. Its function is as follows. Required for maintenance of chromosomal stability. Together with Fancl, and probably Fanci, involved in DNA repair of damage caused by agents that induce interstrand cross-links but not agents that cause double strand breaks. Required for S phase checkpoint activation in response to ionizing radiation induced DNA damage. This Drosophila melanogaster (Fruit fly) protein is Fanconi anemia group D2 protein homolog.